Reading from the N-terminus, the 137-residue chain is Nucleoside diphosphate kinase (137 aa).

The ATP site is built by Lys-9, Phe-57, Arg-85, Thr-91, Arg-102, and Asn-112. His-115 serves as the catalytic Pros-phosphohistidine intermediate.

The protein belongs to the NDK family. As to quaternary structure, homotetramer. It depends on Mg(2+) as a cofactor.

The protein resides in the cytoplasm. It carries out the reaction a 2'-deoxyribonucleoside 5'-diphosphate + ATP = a 2'-deoxyribonucleoside 5'-triphosphate + ADP. It catalyses the reaction a ribonucleoside 5'-diphosphate + ATP = a ribonucleoside 5'-triphosphate + ADP. Major role in the synthesis of nucleoside triphosphates other than ATP. The ATP gamma phosphate is transferred to the NDP beta phosphate via a ping-pong mechanism, using a phosphorylated active-site intermediate. In Campylobacter curvus (strain 525.92), this protein is Nucleoside diphosphate kinase.